A 196-amino-acid polypeptide reads, in one-letter code: Deoxyribose-phosphate aldolase (196 aa).

Aspartate 91 functions as the Proton donor/acceptor in the catalytic mechanism. The active-site Schiff-base intermediate with acetaldehyde is lysine 153. The active-site Proton donor/acceptor is the lysine 182.

The protein belongs to the DeoC/FbaB aldolase family. DeoC type 1 subfamily.

The protein resides in the cytoplasm. The catalysed reaction is 2-deoxy-D-ribose 5-phosphate = D-glyceraldehyde 3-phosphate + acetaldehyde. It participates in carbohydrate degradation; 2-deoxy-D-ribose 1-phosphate degradation; D-glyceraldehyde 3-phosphate and acetaldehyde from 2-deoxy-alpha-D-ribose 1-phosphate: step 2/2. Catalyzes a reversible aldol reaction between acetaldehyde and D-glyceraldehyde 3-phosphate to generate 2-deoxy-D-ribose 5-phosphate. The polypeptide is Deoxyribose-phosphate aldolase (Mycoplasma mycoides subsp. mycoides SC (strain CCUG 32753 / NCTC 10114 / PG1)).